A 393-amino-acid chain; its full sequence is S-adenosylmethionine synthase 3 (393 aa).

A Mg(2+)-binding site is contributed by Glu-9. His-15 is a binding site for ATP. Position 43 (Glu-43) interacts with K(+). 2 residues coordinate L-methionine: Glu-56 and Gln-99. Residues 167–169 (NGK), 235–238 (SGRF), Asp-246, 252–253 (RK), Ala-269, Lys-273, and Lys-277 each bind ATP. Asp-246 contributes to the L-methionine binding site. Residue Lys-277 participates in L-methionine binding.

This sequence belongs to the AdoMet synthase family. In terms of assembly, homotetramer. Mn(2+) serves as cofactor. Requires Mg(2+) as cofactor. Co(2+) is required as a cofactor. It depends on K(+) as a cofactor. As to expression, mostly expressed in flowers, seedpods and roots, and, to a lower extent, in stems and leaves.

The protein localises to the cytoplasm. The enzyme catalyses L-methionine + ATP + H2O = S-adenosyl-L-methionine + phosphate + diphosphate. The protein operates within amino-acid biosynthesis; S-adenosyl-L-methionine biosynthesis; S-adenosyl-L-methionine from L-methionine: step 1/1. Its function is as follows. Catalyzes the formation of S-adenosylmethionine from methionine and ATP. The reaction comprises two steps that are both catalyzed by the same enzyme: formation of S-adenosylmethionine (AdoMet) and triphosphate, and subsequent hydrolysis of the triphosphate. The protein is S-adenosylmethionine synthase 3 (MSAMS3) of Brassica juncea (Indian mustard).